We begin with the raw amino-acid sequence, 523 residues long: Lysine--tRNA ligase (523 aa).

Positions 30-38 (PSGYVHVGN) match the 'HIGH' region motif. Zn(2+) is bound by residues D95, C99, H100, H106, C177, H180, C199, and H203. A 'KMSKS' region motif is present at residues 279-283 (KMSGS).

Belongs to the class-I aminoacyl-tRNA synthetase family. The cofactor is Zn(2+).

Its subcellular location is the cytoplasm. The enzyme catalyses tRNA(Lys) + L-lysine + ATP = L-lysyl-tRNA(Lys) + AMP + diphosphate. The sequence is that of Lysine--tRNA ligase (lysS) from Pyrococcus furiosus (strain ATCC 43587 / DSM 3638 / JCM 8422 / Vc1).